Reading from the N-terminus, the 947-residue chain is MEFSWGSGQESRRLLLLLLLLSAWEAGNGQLHYSVSEEAKHGTFVGRIAQDLGLELAELVPRLFRVASKGRGGLLEVNLQNGILFVNSRIDREELCRRSAECSIHLEVIVDRPLQVFHVDVEVRDINDNPPVFPATQKNLSIAESRPLDSRFPLEGASDADIGENALLTYRLSPNEYFSLEKPSDDELVKGLGLILRKSLDREEAPEIFLVLTATDGGKPELTGTVQLLITVLDANDNAPAFDRTIYKVRLLENVPNGTLVIKLNASDLDEGLNGDIIYSFSNDISPNVKSKFHIDPITGQIIVKGYIDFEESKSYEIIVEGIDKGQLPLSGHCRVIVEVEDNNDNVPDLEFKSLSLPIREDAPLGTVIALISVSDKDMGVNGLVTCSLTSHVPFKLVSTFKNYYSLVLDSALDRESVSAYELVVTARDGGSPSLWATASVSVEVADVNDNAPAFAQPEYTVFVKENNPPGCHIFTVSAWDADAQENALVSYSLVERRVGERALSSYVSVHAESGKVYALQPLDHEELELLQFQVTARDAGVPPLGSNVTLQVFVLDENDNAPALLAHRAGGTGGAVSELVPWSVGVDHVVAKVRAVDADSGYNAWLSYELQPGTGGARIPFRVGLYTGEISTTRALDETDAPRHRLLVLVKDHGEPALTATATVLVSLVESGQAPKASSRALVGAVGPDAALVDVNVYLIIAICAVSSLLVLTLLLYTALRCSAPPTEGACAPGKPTLVCSSAVGSWSYSQQRRPRVCSGEGPPKTDLMAFSPSLPDSRDREDELQTTEESFAKPRQPNPDWRYSASLRAGMHSSVHLEEAGILRAGPGGPDQQWPTVSSATPEPEAGEVSPPVGAGVNSNSWTFKYGPGNPKQSGPGELPDKFIIPGSPAIISIRQEPANSQIDKSDFITFGKKEETKKKKKKKKGNKTQEKKEKGNSTTDNSDQ.

The signal sequence occupies residues 1-29 (MEFSWGSGQESRRLLLLLLLLSAWEAGNG). Cadherin domains follow at residues 30-133 (QLHY…PPVF), 134-242 (PATQ…APAF), 243-350 (DRTI…VPDL), 351-455 (EFKS…APAF), 456-565 (AQPE…APAL), and 588-678 (DHVV…APKA). Over 30-697 (QLHYSVSEEA…GPDAALVDVN (668 aa)) the chain is Extracellular. A disulfide bridge links C96 with C102. Residues N139, N257, and N265 are each glycosylated (N-linked (GlcNAc...) asparagine). Residue N548 is glycosylated (N-linked (GlcNAc...) asparagine). The chain crosses the membrane as a helical span at residues 698–718 (VYLIIAICAVSSLLVLTLLLY). Residues 719 to 947 (TALRCSAPPT…GNSTTDNSDQ (229 aa)) lie on the Cytoplasmic side of the membrane. PXXP repeat units lie at residues 734 to 737 (PGKP), 774 to 777 (PSLP), 796 to 799 (PRQP), 829 to 832 (PGGP), 870 to 873 (PGNP), and 888 to 891 (PGSP). The 6 X 4 AA repeats of P-X-X-P stretch occupies residues 734–891 (PGKPTLVCSS…PDKFIIPGSP (158 aa)). The segment at 738 to 947 (TLVCSSAVGS…GNSTTDNSDQ (210 aa)) is required for interaction with FYN. Disordered stretches follow at residues 754-805 (RRPR…DWRY) and 828-853 (GPGGPDQQWPTVSSATPEPEAGEVSP). The interval 892 to 947 (AIISIRQEPANSQIDKSDFITFGKKEETKKKKKKKKGNKTQEKKEKGNSTTDNSDQ) is disordered. The segment covering 906–920 (DKSDFITFGKKEETK) has biased composition (basic and acidic residues).

In terms of assembly, forms homodimers in trans (molecules expressed by two different cells). Forms promiscuous heterodimers in cis (at the plasma membrane of the same cell) with other protocadherins. Interacts with FYN.

The protein localises to the cell membrane. Calcium-dependent cell-adhesion protein involved in cells self-recognition and non-self discrimination. Thereby, it is involved in the establishment and maintenance of specific neuronal connections in the brain. This chain is Protocadherin alpha-4, found in Pan troglodytes (Chimpanzee).